Consider the following 317-residue polypeptide: Beta-ketoacyl-[acyl-carrier-protein] synthase III (317 aa).

Active-site residues include cysteine 112 and histidine 244. The tract at residues 245–249 is ACP-binding; the sequence is QANLR. Asparagine 274 is an active-site residue.

The protein belongs to the thiolase-like superfamily. FabH family. Homodimer.

The protein localises to the cytoplasm. It carries out the reaction malonyl-[ACP] + acetyl-CoA + H(+) = 3-oxobutanoyl-[ACP] + CO2 + CoA. The protein operates within lipid metabolism; fatty acid biosynthesis. Catalyzes the condensation reaction of fatty acid synthesis by the addition to an acyl acceptor of two carbons from malonyl-ACP. Catalyzes the first condensation reaction which initiates fatty acid synthesis and may therefore play a role in governing the total rate of fatty acid production. Possesses both acetoacetyl-ACP synthase and acetyl transacylase activities. Its substrate specificity determines the biosynthesis of branched-chain and/or straight-chain of fatty acids. This chain is Beta-ketoacyl-[acyl-carrier-protein] synthase III, found in Salmonella arizonae (strain ATCC BAA-731 / CDC346-86 / RSK2980).